Here is an 899-residue protein sequence, read N- to C-terminus: MSRRRKHGDSSGLKQTPRKAMATEEGSLVFESGKRRLRAARGSGPQGPGERPPRPLPQQEQPPVAASCRKSNTEERYETPKRMLQMDLLSSTFSSPNDPDGQNDIFWDQNSPMTKQLDKGRKKQLYTTDSDEISHIVNRIAPQDEKPTTDSMLGVWIGDTAIPCTPSVAKGKSRTKLSCTKLKSQNQEEELMKLAKQFDKNMEELDVIQEQDKRNHDLIQMISEAETSLNCRDNVQMQLLCDTVPEIDKALLKKPVKENTKISVVNDQTSSQKPFDQNAEAAFIAMFDGSTQKCSGQLSQDLSDSFLKTSNTTFGKKNTLKEEKIITNESVVTENLPSKTLGSLSHQVDNPGMTKSYVTFCTKEPGTFNKHIDTFTTSDFEDDWENLLSNEPFVMQNIETSELFPAPKTIQIADQKEMCSFNSKEAKSKSGMNKSVDVKLRDSKILQGLPSNTWNNELTDAEKYRFSPKPNDKPNKLSTTGNKMKLEKSFNIVVNQDKIQDCAVASNLTKVNEDTHTKFNCKVNASEKKSALKPGCSNKSIFNQSLKVPANVKPFGSATLGSTTSVCNPDQTNGSKLGSFFDDWNDPSFTNEIVKACHQLENSWEADDVDDDILYQACDDIERLTQEQNIRVDSKTSESVLEINNSSKHGAKNVFTTPKQGSQFMQSKHLNLNSISAQTSSLANSLQINKSVKMERGEMYGNSPGFLGATTNLSIYSKNSDCQISNLHVSCNNPDVPKQVNSSKSVLTGSSSLNVGSHHMSTEIAASKNRLSTLHLSKSTTRGKAQSDLNRAVRLSEYVFTKMKNCPMLSPFNNSSVTGSISDTKIAQGLEKNKTVNPLPGKAVQQQPLVKFSEPLKQPSKEEEEKNRKCSPEEIQRKRQAALIRRMAKAQASSVKKGR.

The tract at residues 1–82 (MSRRRKHGDS…TEERYETPKR (82 aa)) is disordered. Residues 71 to 81 (SNTEERYETPK) show a composition bias toward basic and acidic residues. Positions 105 to 111 (IFWDQNS) match the ATR-activation domain (AAD) motif. Residues 180-210 (TKLKSQNQEEELMKLAKQFDKNMEELDVIQE) are a coiled coil. Glycyl lysine isopeptide (Lys-Gly) (interchain with G-Cter in SUMO2) cross-links involve residues K416 and K444. A Phosphoserine modification is found at S467. Residues K485 and K539 each participate in a glycyl lysine isopeptide (Lys-Gly) (interchain with G-Cter in SUMO2) cross-link. An RBM1 motif motif is present at residues 607-622 (DDVDDDILYQACDDIE). S810 bears the Phosphoserine mark. The interval 833–899 (NKTVNPLPGK…AQASSVKKGR (67 aa)) is disordered. Basic and acidic residues predominate over residues 859-877 (PSKEEEEKNRKCSPEEIQR). Positions 868-890 (RKCSPEEIQRKRQAALIRRMAKA) match the RBM2 motif motif.

In terms of assembly, interacts (via RBM1 motif) with RPA1. Interacts (via RBM2 motif) with RPA2. Interacts (via the ATR-activation domain motif) with ATR. Post-translationally, phosphorylated by ATR.

The protein resides in the nucleus. In terms of biological role, replication stress response protein that accumulates at DNA damage sites and promotes replication fork progression and integrity. Recruited to stalled replication forks via interaction with the RPA complex and directly stimulates ATR kinase activity independently of TOPBP1. Probably only regulates a subset of ATR targets. This is Ewing's tumor-associated antigen 1 homolog from Bos taurus (Bovine).